The chain runs to 341 residues: L-threonine 3-dehydrogenase (341 aa).

A Zn(2+)-binding site is contributed by Cys-38. Catalysis depends on charge relay system residues Thr-40 and His-43. Zn(2+)-binding residues include His-63, Glu-64, Cys-93, Cys-96, Cys-99, and Cys-107. Residues Ile-175, Asp-195, Arg-200, 262-264, and 286-287 each bind NAD(+); these read LGI and IY.

The protein belongs to the zinc-containing alcohol dehydrogenase family. As to quaternary structure, homotetramer. Zn(2+) is required as a cofactor.

It localises to the cytoplasm. It catalyses the reaction L-threonine + NAD(+) = (2S)-2-amino-3-oxobutanoate + NADH + H(+). Its pathway is amino-acid degradation; L-threonine degradation via oxydo-reductase pathway; glycine from L-threonine: step 1/2. Its function is as follows. Catalyzes the NAD(+)-dependent oxidation of L-threonine to 2-amino-3-ketobutyrate. The chain is L-threonine 3-dehydrogenase from Shewanella sediminis (strain HAW-EB3).